The sequence spans 157 residues: Cell number regulator 10 (157 aa).

The next 2 helical transmembrane spans lie at 41–57 (DCGLCCLTCWCPCITFG) and 66–83 (GATSCGTAGALYAVLAYF).

It belongs to the cornifelin family. Expressed in roots, leaves, stalks, immature ears and silks.

The protein localises to the membrane. The sequence is that of Cell number regulator 10 (CNR10) from Zea mays (Maize).